The following is a 220-amino-acid chain: Iron-sulfur cluster repair protein YtfE (220 aa).

The protein belongs to the RIC family. YtfE subfamily. Homodimer.

It localises to the cytoplasm. Its function is as follows. Di-iron-containing protein involved in the repair of iron-sulfur clusters damaged by oxidative and nitrosative stress conditions. In Escherichia coli (strain SMS-3-5 / SECEC), this protein is Iron-sulfur cluster repair protein YtfE.